Here is a 427-residue protein sequence, read N- to C-terminus: UDP-N-acetylglucosamine 1-carboxyvinyltransferase (427 aa).

A phosphoenolpyruvate-binding site is contributed by 24–25 (KN). R95 provides a ligand contact to UDP-N-acetyl-alpha-D-glucosamine. C119 (proton donor) is an active-site residue. C119 carries the post-translational modification 2-(S-cysteinyl)pyruvic acid O-phosphothioketal. UDP-N-acetyl-alpha-D-glucosamine-binding positions include 124-128 (RPVDQ), D308, and V330.

The protein belongs to the EPSP synthase family. MurA subfamily.

It is found in the cytoplasm. It catalyses the reaction phosphoenolpyruvate + UDP-N-acetyl-alpha-D-glucosamine = UDP-N-acetyl-3-O-(1-carboxyvinyl)-alpha-D-glucosamine + phosphate. The protein operates within cell wall biogenesis; peptidoglycan biosynthesis. Functionally, cell wall formation. Adds enolpyruvyl to UDP-N-acetylglucosamine. The chain is UDP-N-acetylglucosamine 1-carboxyvinyltransferase from Deinococcus geothermalis (strain DSM 11300 / CIP 105573 / AG-3a).